We begin with the raw amino-acid sequence, 324 residues long: Alkanal monooxygenase beta chain (324 aa).

Belongs to the bacterial luciferase oxidoreductase family. Heterodimer of an alpha and a beta chain.

The enzyme catalyses a long-chain fatty aldehyde + FMNH2 + O2 = a long-chain fatty acid + hnu + FMN + H2O + 2 H(+). Functionally, light-emitting reaction in luminous bacteria. The specific role of the beta subunit is unknown, but it is absolutely required for bioluminescence activity. This is Alkanal monooxygenase beta chain (luxB) from Vibrio harveyi (Beneckea harveyi).